Consider the following 226-residue polypeptide: Ribose-5-phosphate isomerase A (226 aa).

Substrate contacts are provided by residues 33 to 36, 86 to 89, and 99 to 102; these read TGST, DGAD, and KGGG. The active-site Proton acceptor is Glu-108. Lys-126 contacts substrate.

The protein belongs to the ribose 5-phosphate isomerase family. Homodimer.

The enzyme catalyses aldehydo-D-ribose 5-phosphate = D-ribulose 5-phosphate. It participates in carbohydrate degradation; pentose phosphate pathway; D-ribose 5-phosphate from D-ribulose 5-phosphate (non-oxidative stage): step 1/1. In terms of biological role, catalyzes the reversible conversion of ribose-5-phosphate to ribulose 5-phosphate. In Bordetella pertussis (strain Tohama I / ATCC BAA-589 / NCTC 13251), this protein is Ribose-5-phosphate isomerase A.